Here is an 87-residue protein sequence, read N- to C-terminus: Large ribosomal subunit protein bL27 (87 aa).

The interval 1–21 (MAHKKAGGSSRNGRDSESKRL) is disordered.

It belongs to the bacterial ribosomal protein bL27 family.

The protein is Large ribosomal subunit protein bL27 of Paraburkholderia xenovorans (strain LB400).